A 710-amino-acid chain; its full sequence is MTSSSPRHADPDENPYVEAPPTDFEPVGALSEDEATEQASLLRAAIREHDHRYYLEADPLIPDETYDRLFTRLQELENEFDLPTQNSPTRRVGGEPLDELATVEHVAPMRSIDNATEADAVREFDGRVRKGLDAEGFDSDAVEYVCEPKFDGLSVEVIYEDGEYVRAATRGDGTAGDDVTEQVRTIRSVPGKLRGDPPSRLAVRGEAYMPRDAFKAYNEALMERGEEPFANPRNAAAGTLRQLDPSVVAERPLDIFFFDVLGWENDAEGDSPNRPATHWEEFDTFDAFGLRRANRVERVDDIEGALDYRDRLMADREDLNFAIDGVVIAVDDRANREALGATARAPRWAFAYKFPPRTATTIVEGITVQVGRTGRLTPVAELDPIDVGGVTVSRATLHNPAEIEALGVNVGDCVRIYRAGDVIPYVPEVVEKRSEGTYVFPETCPICDAPVERDGPLAFCTGGLVCPAQLERAVEHWARRDALDIEGLGPERVQQLREAGLVESLPDLYDLAVDDLAALEGWGETSAENLIAELAATRDPPLDDFLAGLGIPDVGATTARALAAHFGDLDAILDADEDALRAVDDVGPEVAESIRTFLDNAENRVAIDGLRERGVDPESVDVETGDALDGLTFVFTGSLSTTRGEAQAHVEAHGADATSSVSGNTDYLVAGESPGRSKRDDADAEGVPVVDEEEFAGLLAERGVAWPPEE.

The interval 1 to 36 (MTSSSPRHADPDENPYVEAPPTDFEPVGALSEDEAT) is disordered. NAD(+) contacts are provided by residues 63-67 (DETYD), 111-112 (SI), and Glu-147. The N6-AMP-lysine intermediate role is filled by Lys-149. Arg-170, Glu-206, and Lys-353 together coordinate NAD(+). Zn(2+) is bound by residues Cys-444, Cys-447, Cys-460, and Cys-466. The BRCT domain maps to 623–710 (ETGDALDGLT…ERGVAWPPEE (88 aa)). The disordered stretch occupies residues 657–689 (ATSSVSGNTDYLVAGESPGRSKRDDADAEGVPV).

Belongs to the NAD-dependent DNA ligase family. LigA subfamily. Mg(2+) is required as a cofactor. Mn(2+) serves as cofactor.

It carries out the reaction NAD(+) + (deoxyribonucleotide)n-3'-hydroxyl + 5'-phospho-(deoxyribonucleotide)m = (deoxyribonucleotide)n+m + AMP + beta-nicotinamide D-nucleotide.. DNA ligase that catalyzes the formation of phosphodiester linkages between 5'-phosphoryl and 3'-hydroxyl groups in double-stranded DNA using NAD as a coenzyme and as the energy source for the reaction. It is essential for DNA replication and repair of damaged DNA. This chain is DNA ligase, found in Halorubrum lacusprofundi (strain ATCC 49239 / DSM 5036 / JCM 8891 / ACAM 34).